The sequence spans 410 residues: Mating-type locus allele B6 protein (410 aa).

Residues 1–110 form a variable domain between B alleles region; the sequence is MSRDPKLSLS…VNVASPAVEY (110 aa). The homeobox; TALE-type DNA-binding region spans 107-184; it reads AVEYRNLSED…NARRRSGWSH (78 aa). The tract at residues 111 to 410 is highly conserved between B alleles; that stretch reads RNLSEDLPAY…PFFCLSIAFV (300 aa). Disordered stretches follow at residues 202–224, 278–335, and 373–393; these read RAKL…PSDD, TPKP…TPEL, and KARG…QQPD. Positions 205–219 are enriched in polar residues; that stretch reads LSSSNQSTPPSLTSE. Residues 276–308 carry the Nuclear localization signal motif; sequence KKTPKPGMPRPVTTVAKRQPARKTKPAAKPKSR. Residues 294-307 are compositionally biased toward basic residues; that stretch reads QPARKTKPAAKPKS. The span at 312 to 335 shows a compositional bias: polar residues; that stretch reads PRASTTPSIDSTLDSSKLESTPEL. A not essential for B6 function region spans residues 333–410; it reads PELSMCSTAD…PFFCLSIAFV (78 aa). Residues 375-388 show a composition bias toward basic residues; that stretch reads RGNRKVKALPKRAG.

It belongs to the TALE/M-ATYP homeobox family.

Its subcellular location is the nucleus. Its function is as follows. The B locus has at least 25 alleles, and any combination of two different B alleles yields a multimeric regulatory protein, that activates genes responsible for the pathogenicity and for the sexual development of the fungus within the corn plant. This Mycosarcoma maydis (Corn smut fungus) protein is Mating-type locus allele B6 protein.